A 545-amino-acid chain; its full sequence is Chaperonin GroEL 2 (545 aa).

Residues threonine 29–proline 32, aspartate 86–threonine 90, glycine 413, asparagine 479–alanine 481, and aspartate 495 contribute to the ATP site.

Belongs to the chaperonin (HSP60) family. In terms of assembly, forms a cylinder of 14 subunits composed of two heptameric rings stacked back-to-back. Interacts with the co-chaperonin GroES.

It is found in the cytoplasm. The catalysed reaction is ATP + H2O + a folded polypeptide = ADP + phosphate + an unfolded polypeptide.. Its function is as follows. Together with its co-chaperonin GroES, plays an essential role in assisting protein folding. The GroEL-GroES system forms a nano-cage that allows encapsulation of the non-native substrate proteins and provides a physical environment optimized to promote and accelerate protein folding. The chain is Chaperonin GroEL 2 from Prochlorococcus marinus (strain MIT 9312).